We begin with the raw amino-acid sequence, 61 residues long: Large ribosomal subunit protein bL32 (61 aa).

The segment at 1 to 44 is disordered; sequence MAVQQNRKSRSRRDMRRSHDALTENALTVDQTTGETHRRHHVTK. The span at 7-16 shows a compositional bias: basic residues; that stretch reads RKSRSRRDMR. The span at 25 to 34 shows a compositional bias: polar residues; sequence NALTVDQTTG.

This sequence belongs to the bacterial ribosomal protein bL32 family.

The protein is Large ribosomal subunit protein bL32 of Acinetobacter baylyi (strain ATCC 33305 / BD413 / ADP1).